The sequence spans 370 residues: Cobalt-precorrin-5B C(1)-methyltransferase (370 aa).

Belongs to the CbiD family.

It carries out the reaction Co-precorrin-5B + S-adenosyl-L-methionine = Co-precorrin-6A + S-adenosyl-L-homocysteine. The protein operates within cofactor biosynthesis; adenosylcobalamin biosynthesis; cob(II)yrinate a,c-diamide from sirohydrochlorin (anaerobic route): step 6/10. Its function is as follows. Catalyzes the methylation of C-1 in cobalt-precorrin-5B to form cobalt-precorrin-6A. This is Cobalt-precorrin-5B C(1)-methyltransferase from Pseudomonas savastanoi pv. phaseolicola (strain 1448A / Race 6) (Pseudomonas syringae pv. phaseolicola (strain 1448A / Race 6)).